Reading from the N-terminus, the 450-residue chain is Exodeoxyribonuclease 7 large subunit (450 aa).

Belongs to the XseA family. Heterooligomer composed of large and small subunits.

Its subcellular location is the cytoplasm. It carries out the reaction Exonucleolytic cleavage in either 5'- to 3'- or 3'- to 5'-direction to yield nucleoside 5'-phosphates.. Its function is as follows. Bidirectionally degrades single-stranded DNA into large acid-insoluble oligonucleotides, which are then degraded further into small acid-soluble oligonucleotides. This is Exodeoxyribonuclease 7 large subunit from Listeria monocytogenes serotype 4b (strain CLIP80459).